A 309-amino-acid chain; its full sequence is Ribonuclease Z (309 aa).

The Zn(2+) site is built by His-63, His-65, Asp-67, His-68, His-145, Asp-216, and His-274. The active-site Proton acceptor is the Asp-67.

This sequence belongs to the RNase Z family. Homodimer. Zn(2+) serves as cofactor.

The catalysed reaction is Endonucleolytic cleavage of RNA, removing extra 3' nucleotides from tRNA precursor, generating 3' termini of tRNAs. A 3'-hydroxy group is left at the tRNA terminus and a 5'-phosphoryl group is left at the trailer molecule.. Its function is as follows. Zinc phosphodiesterase, which displays some tRNA 3'-processing endonuclease activity. Probably involved in tRNA maturation, by removing a 3'-trailer from precursor tRNA. The sequence is that of Ribonuclease Z from Streptococcus pyogenes serotype M1.